The sequence spans 1372 residues: DNA-directed RNA polymerase subunit beta (1372 aa).

Belongs to the RNA polymerase beta chain family. In terms of assembly, the RNAP catalytic core consists of 2 alpha, 1 beta, 1 beta' and 1 omega subunit. When a sigma factor is associated with the core the holoenzyme is formed, which can initiate transcription.

It catalyses the reaction RNA(n) + a ribonucleoside 5'-triphosphate = RNA(n+1) + diphosphate. DNA-dependent RNA polymerase catalyzes the transcription of DNA into RNA using the four ribonucleoside triphosphates as substrates. This Rickettsia bellii (strain RML369-C) protein is DNA-directed RNA polymerase subunit beta.